We begin with the raw amino-acid sequence, 719 residues long: DNA replication licensing factor MCM7 (719 aa).

Alanine 2 bears the N-acetylalanine mark. Glycyl lysine isopeptide (Lys-Gly) (interchain with G-Cter in SUMO2) cross-links involve residues lysine 15 and lysine 28. A phosphoserine mark is found at serine 121 and serine 314. In terms of domain architecture, MCM spans 332 to 538; sequence FYEKLAASIA…NDLRLAQHIT (207 aa). Tyrosine 345 provides a ligand contact to ATP. A Phosphoserine modification is found at serine 365. Residues glycine 384, alanine 386, lysine 387, serine 388, and asparagine 489 each contribute to the ATP site. A Phosphoserine modification is found at serine 500. An Arginine finger motif is present at residues 513–516; it reads SRFD. Arginine 514 serves as a coordination point for ATP. An interaction with RAD17 region spans residues 521–564; the sequence is IQDRPDRDNDLRLAQHITYVHQHSRQPPAQFEPLDMKLMRRYIA. An interaction with ATRIP region spans residues 577-719; sequence LADYITAAYV…NTARTRITFV (143 aa). Arginine 604 provides a ligand contact to ATP. Serine 678 is modified (phosphoserine).

It belongs to the MCM family. In terms of assembly, component of the MCM2-7 complex. The complex forms a toroidal hexameric ring with the proposed subunit order MCM2-MCM6-MCM4-MCM7-MCM3-MCM5. Component of the CMG helicase complex, a hexameric ring of related MCM2-7 subunits stabilized by CDC45 and the tetrameric GINS complex. Interacts with the ATR-ATRIP complex and with RAD17. Interacts with TIPIN. Interacts with MCMBP. Interacts with ANKRD17. Component of the replisome complex composed of at least DONSON, MCM2, MCM7, PCNA and TICRR. In terms of processing, O-glycosylated (O-GlcNAcylated), in a cell cycle-dependent manner. Post-translationally, ubiquitinated by ECS(LRR1) E3 ubiquitin-protein ligase complex when forks converge following formation of DNA interstrand cross-links. During mitosis, ubiquitinated by TRAIP when forks converge following formation of DNA interstrand cross-links. Short ubiquitin chains on MCM7 promote recruitment of DNA glycosylase NEIL3. If the interstrand cross-link cannot be cleaved by NEIL3, the ubiquitin chains continue to grow on MCM7, promoting the unloading of the CMG helicase complex by the VCP/p97 ATPase.

Its subcellular location is the nucleus. It localises to the chromosome. It carries out the reaction ATP + H2O = ADP + phosphate + H(+). In terms of biological role, acts as a component of the MCM2-7 complex (MCM complex) which is the replicative helicase essential for 'once per cell cycle' DNA replication initiation and elongation in eukaryotic cells. Core component of CDC45-MCM-GINS (CMG) helicase, the molecular machine that unwinds template DNA during replication, and around which the replisome is built. The active ATPase sites in the MCM2-7 ring are formed through the interaction surfaces of two neighboring subunits such that a critical structure of a conserved arginine finger motif is provided in trans relative to the ATP-binding site of the Walker A box of the adjacent subunit. The six ATPase active sites, however, are likely to contribute differentially to the complex helicase activity. Required for S-phase checkpoint activation upon UV-induced damage. The sequence is that of DNA replication licensing factor MCM7 (MCM7) from Bos taurus (Bovine).